The chain runs to 89 residues: Small ribosomal subunit protein uS15 (89 aa).

This sequence belongs to the universal ribosomal protein uS15 family. As to quaternary structure, part of the 30S ribosomal subunit. Forms a bridge to the 50S subunit in the 70S ribosome, contacting the 23S rRNA.

In terms of biological role, one of the primary rRNA binding proteins, it binds directly to 16S rRNA where it helps nucleate assembly of the platform of the 30S subunit by binding and bridging several RNA helices of the 16S rRNA. Forms an intersubunit bridge (bridge B4) with the 23S rRNA of the 50S subunit in the ribosome. The chain is Small ribosomal subunit protein uS15 from Synechococcus elongatus (strain ATCC 33912 / PCC 7942 / FACHB-805) (Anacystis nidulans R2).